The sequence spans 417 residues: Metal-binding activator 1 (417 aa).

Positions 1–40 (MIIFNGNKYACASCIRGHRSSTCRHSHRMLIKVRTRGRPS) form a DNA-binding region, copper-fist. Residues C11, C14, C23, and H25 each coordinate Zn(2+). Disordered stretches follow at residues 128 to 198 (FLRK…IFTP) and 216 to 242 (YNSS…AAPH). The residue at position 143 (S143) is a Phosphoserine. Over residues 153–178 (SEKKERSRLQQEPIRHFSNCCKKDKS) the composition is skewed to basic and acidic residues. 2 stretches are compositionally biased toward polar residues: residues 179-190 (QNPASNGKTNKA) and 228-238 (ETLTPQSTTTI). A run of 2 repeats spans residues 264–279 (CSCE…CLIH) and 322–337 (CICP…CFSH). Residues 264–337 (CSCEDESCPC…NCTCDGCFSH (74 aa)) are 2 X 16 AA repeat of C-X-C-X(4)-C-X-C-X-X-C-X-X-H.

The protein resides in the nucleus. Its function is as follows. Regulatory protein involved in Cu/Fe utilization and stress resistance. Involved in basal level transcription of FRE1 and H(2)O(2)-induced transcription of CTT1. Regulates the transcription of CTR1 and CTR3 via the copper ion responsive elements in their promoters. Required for degradation of CTR1. The polypeptide is Metal-binding activator 1 (MAC1) (Saccharomyces cerevisiae (strain ATCC 204508 / S288c) (Baker's yeast)).